The sequence spans 308 residues: Cell division protein FtsQ (308 aa).

The disordered stretch occupies residues 1–28; that stretch reads MQSLSFPPNRRTPRLAPPRRETGRRDPA. Residues 1-46 are Cytoplasmic-facing; sequence MQSLSFPPNRRTPRLAPPRRETGRRDPAPSRWAYRAQRLWLTPMFR. The span at 18-28 shows a compositional bias: basic and acidic residues; the sequence is PRRETGRRDPA. Residues 47-67 form a helical membrane-spanning segment; the sequence is TALRVGLPIVGVLLVVALIFA. Topologically, residues 68-308 are periplasmic; that stretch reads SADRRAAMAG…RGIDTSGSDL (241 aa). Residues 92–160 form the POTRA domain; sequence FMVTLLSVDG…GLLEVRVTER (69 aa).

Belongs to the FtsQ/DivIB family. FtsQ subfamily.

It localises to the cell inner membrane. Its function is as follows. Essential cell division protein. The polypeptide is Cell division protein FtsQ (Cereibacter sphaeroides (strain ATCC 17023 / DSM 158 / JCM 6121 / CCUG 31486 / LMG 2827 / NBRC 12203 / NCIMB 8253 / ATH 2.4.1.) (Rhodobacter sphaeroides)).